The sequence spans 91 residues: UPF0367 protein cce_2199 (91 aa).

This sequence belongs to the UPF0367 family.

The chain is UPF0367 protein cce_2199 from Crocosphaera subtropica (strain ATCC 51142 / BH68) (Cyanothece sp. (strain ATCC 51142)).